Reading from the N-terminus, the 566-residue chain is OTU domain-containing protein 5 (566 aa).

2 disordered regions span residues 1–117 (MTIL…GDAL) and 146–175 (PGHS…GAGY). Over residues 11-30 (PPDADPANEPPPPGPLPPAP) the composition is skewed to pro residues. A compositionally biased stretch (gly residues) spans 32 to 47 (RGGGVGVGGGGTGVGG). The segment covering 63–75 (ASPPPQGPLPGPP) has biased composition (pro residues). Residue serine 64 is modified to Phosphoserine. The span at 84 to 97 (AVPPGAVAGPRPQQ) shows a compositional bias: low complexity. Over residues 105 to 115 (GPGGPGGGPGD) the composition is skewed to gly residues. Phosphoserine is present on serine 165. At tyrosine 175 the chain carries Phosphotyrosine. Serine 177 carries the phosphoserine modification. A Phosphothreonine modification is found at threonine 195. The OTU domain occupies 213 to 336 (FIIKQMKEDG…NIHYNSVVNP (124 aa)). The tract at residues 218 to 224 (MKEDGAC) is cys-loop. Aspartate 221 is an active-site residue. Catalysis depends on cysteine 224, which acts as the Nucleophile. Positions 273 to 283 (KRKNNCHGNHI) are variable-loop. Residue serine 323 is modified to Phosphoserine. The his-loop stretch occupies residues 324–329 (YHRNIH). Residue histidine 329 is part of the active site. A phosphoserine mark is found at serine 332 and serine 370. Positions 413–497 (ARQVRGPSQP…PGTSSQFSAG (85 aa)) are disordered. Low complexity-rich tracts occupy residues 425–438 (ASAT…AASS) and 445–457 (SRSP…ASSP). At serine 447 the chain carries Phosphoserine. The residue at position 502 (threonine 502) is a Phosphothreonine. Serine 503 carries the phosphoserine modification.

Belongs to the peptidase C85 family. Interacts with TRAF3. Post-translationally, phosphorylation at Ser-177 is required for deubiquitinating activity. Phosphorylation at Ser-323, Ser-332 and Ser-503 by MTOR promotes its activity.

The protein resides in the nucleus. The catalysed reaction is Thiol-dependent hydrolysis of ester, thioester, amide, peptide and isopeptide bonds formed by the C-terminal Gly of ubiquitin (a 76-residue protein attached to proteins as an intracellular targeting signal).. With respect to regulation, inhibited by N-ethyl-maleimide (NEM). Deubiquitinating enzyme that functions as a negative regulator of the innate immune system. Has peptidase activity towards 'Lys-48'- and 'Lys-63'-linked polyubiquitin chains. Can also cleave 'Lys-11'-linked ubiquitin chains (in vitro). Acts via TRAF3 deubiquitination and subsequent suppression of type I interferon (IFN) production. Controls neuroectodermal differentiation through cleaving 'Lys-48'-linked ubiquitin chains to counteract degradation of select chromatin regulators such as ARID1A, HDAC2 and HCF1. Acts as a positive regulator of mTORC1 and mTORC2 signaling following phosphorylation by MTOR: acts by mediating deubiquitination of BTRC, leading to its stability. The polypeptide is OTU domain-containing protein 5 (Rattus norvegicus (Rat)).